A 317-amino-acid chain; its full sequence is Ribosomal RNA large subunit methyltransferase F (317 aa).

The protein belongs to the methyltransferase superfamily. METTL16/RlmF family.

It localises to the cytoplasm. It catalyses the reaction adenosine(1618) in 23S rRNA + S-adenosyl-L-methionine = N(6)-methyladenosine(1618) in 23S rRNA + S-adenosyl-L-homocysteine + H(+). Functionally, specifically methylates the adenine in position 1618 of 23S rRNA. The chain is Ribosomal RNA large subunit methyltransferase F from Pseudomonas putida (strain ATCC 47054 / DSM 6125 / CFBP 8728 / NCIMB 11950 / KT2440).